Consider the following 471-residue polypeptide: Apyrase 1 (471 aa).

The Cytoplasmic segment spans residues 1–21 (MTAKRAIGRHESLADKVHRHR). A helical; Signal-anchor for type II membrane protein transmembrane segment spans residues 22–42 (GLLLVISIPIVLIALVLLLMP). At 43–471 (GTSTSVSVIE…GSAIEAVSSP (429 aa)) the chain is on the lumenal side. Residue 72 to 82 (VIFDAGSSGSR) participates in ATP binding. Glu194 serves as the catalytic Proton acceptor. ATP is bound at residue 218–228 (GVVDLGGGSVQ). The N-linked (GlcNAc...) asparagine glycan is linked to Asn333.

Belongs to the GDA1/CD39 NTPase family. It depends on Ca(2+) as a cofactor. Expressed in roots, root hairs, root cap, leaves, stems, trichomes, phloem throughout the plant, guard cells, filaments of young stamens, stipules, papillae of stigmas, pollen, pollen tubes and the abscission zone of siliques.

The protein resides in the golgi apparatus membrane. The protein localises to the membrane. The enzyme catalyses a ribonucleoside 5'-triphosphate + 2 H2O = a ribonucleoside 5'-phosphate + 2 phosphate + 2 H(+). Functionally, catalyzes the hydrolysis of phosphoanhydride bonds of nucleoside tri- and di-phosphates. Substrate preference is ATP &gt; ADP. Functions with APY2 to reduce extracellular ATP level which is essential for pollen germination and normal plant development. Plays a role in the regulation of stomatal function by modulating extracellular ATP levels in guard cells. This chain is Apyrase 1 (APY1), found in Arabidopsis thaliana (Mouse-ear cress).